A 1115-amino-acid polypeptide reads, in one-letter code: Ubiquitin C-terminal hydrolase 13 (1115 aa).

Positions 1 to 51 (MTMMTPPPLDQQEDEEMLVPNPDLVEGPQPMEVAQTDPAATAVENPPPEDP) are disordered. The region spanning 53 to 178 (SLKFTWTIPM…NDTVLIEAEV (126 aa)) is the MATH domain. The region spanning 198-522 (VGLKNQGATC…NAYMLVYIRE (325 aa)) is the USP domain. The active-site Nucleophile is the Cys207. His454 serves as the catalytic Proton acceptor.

This sequence belongs to the peptidase C19 family. As to quaternary structure, interacts with SIC/RON3. Interacts with RGI1 and RGI2.

The catalysed reaction is Thiol-dependent hydrolysis of ester, thioester, amide, peptide and isopeptide bonds formed by the C-terminal Gly of ubiquitin (a 76-residue protein attached to proteins as an intracellular targeting signal).. Its function is as follows. Recognizes and hydrolyzes the peptide bond at the C-terminal Gly of ubiquitin. Involved in the processing of poly-ubiquitin precursors as well as that of ubiquitinated proteins. Positive regulator of root meristem development that, together with UBP12, prevents the ubiquitination and turnover of RGFR1 induced by the RGF1 hormone peptide, thus influencing PLT1 and PLT2 expression. This Arabidopsis thaliana (Mouse-ear cress) protein is Ubiquitin C-terminal hydrolase 13.